The primary structure comprises 354 residues: 2-methylisoborneol synthase (354 aa).

Residues 1–29 (MIELIGHETPVPSQQQHTGGVRGTSACTP) form a disordered region. Mg(2+) is bound by residues Asp113, Asp114, Glu118, Asn264, Ser268, and Glu272.

The protein belongs to the terpene synthase family. 2-methylisoborneol synthase subfamily. Requires Mg(2+) as cofactor.

The catalysed reaction is (E)-2-methylgeranyl diphosphate + H2O = 2-methylisoborneol + diphosphate. Its function is as follows. Catalyzes the cyclization of 2-methylgeranyl diphosphate (2-MeGPP) to 2-methylisoborneol (2-MIB), which likely involves the intermediacy of 2-methyllinalyl diphosphate. The chain is 2-methylisoborneol synthase from Saccharopolyspora erythraea (strain ATCC 11635 / DSM 40517 / JCM 4748 / NBRC 13426 / NCIMB 8594 / NRRL 2338).